Reading from the N-terminus, the 1264-residue chain is Phosphatidylinositol 3,4,5-trisphosphate 5-phosphatase 2 (1264 aa).

Residues 26–122 form the SH2 domain; that stretch reads WYHRDLSRAA…GLVCALLLPV (97 aa). Residues 124-137 show a composition bias toward basic and acidic residues; it reads REREPDPPDDRDVS. The disordered stretch occupies residues 124-182; that stretch reads REREPDPPDDRDVSDGEDEKPPLPPRSGSTSISAPVGPGSPPAAPETPTTPAAESAPNG. Ser137 carries the post-translational modification Phosphoserine. Residues 169-180 show a composition bias toward low complexity; sequence ETPTTPAAESAP. A Phosphothreonine modification is found at Thr170. Phosphoserine occurs at positions 246 and 358. Residue Tyr892 is modified to Phosphotyrosine. Ser896 carries the post-translational modification Phosphoserine. The interval 903-1123 is disordered; sequence GAKSKAPSVS…TFLGEVASGD (221 aa). Over residues 944–954 the composition is skewed to pro residues; sequence PPPTGRPPAPP. Residues 950–955 carry the SH3-binding motif; it reads PPAPPR. The segment covering 957-971 has biased composition (basic and acidic residues); it reads ASREEPLTPRLKAEG. The residue at position 964 (Thr964) is a Phosphothreonine. An NPXY motif motif is present at residues 989-992; that stretch reads NPAY. Residue Tyr992 is modified to Phosphotyrosine. 3 stretches are compositionally biased toward pro residues: residues 1002–1017, 1054–1065, and 1093–1110; these read LLPP…PVPP, LPPPDFPPPPLP, and GPPP…PGPS. Phosphoserine is present on Ser1137. The segment at 1140–1178 is disordered; it reads DYAPAGPGRSVLLPGPLELQPPRGLPSDYGRPLSFPPPR. A phosphotyrosine mark is found at Tyr1141 and Tyr1168. The SAM domain occupies 1210 to 1264; that stretch reads WLRAIGLERYEEGLVHNGWDDLEFLSDITEEDLEEAGVQDPAHKRLLLDTLQLSK. Phosphoserine is present on Ser1263.

The protein belongs to the inositol 1,4,5-trisphosphate 5-phosphatase family. Interacts with tyrosine phosphorylated form of SHC1. Interacts with EGFR. Upon stimulation by the EGF signaling pathway, it forms a complex with SHC1 and EGFR. Interacts with cytoskeletal protein SORBS3/vinexin, promoting its localization to the periphery of cells. Forms a complex with filamin (FLNA or FLNB), actin, GPIb (GP1BA or GP1BB) that regulates cortical and submembraneous actin. Interacts with c-Met/MET, when c-Met/MET is phosphorylated on 'Tyr-1356'. Interacts with p130Cas/BCAR1. Interacts with CENTD3/ARAP3 via its SAM domain. Interacts with c-Cbl/CBL and CAP/SORBS1. Interacts with activated EPHA2 receptor. Interacts with receptor FCGR2A. Interacts with receptor FCGR2B. Interacts with tyrosine kinase ABL1. Interacts with tyrosine kinase TEC. Interacts with CSF1R. Interacts (via N-terminus) with SH3YL1 (via SH3 domain). Interacts with FCRL6 (tyrosine phosphorylated form). Interacts (via SH2 domain) with tyrosine phosphorylated KLRC1 (via ITIM). Interacts with NEDD9/HEF1. Tyrosine phosphorylated by the members of the SRC family after exposure to a diverse array of extracellular stimuli such as insulin, growth factors such as EGF or PDGF, chemokines, integrin ligands and hypertonic and oxidative stress. May be phosphorylated upon IgG receptor FCGR2B-binding. Phosphorylated at Tyr-992 following cell attachment and spreading. Phosphorylated at Tyr-1168 following EGF signaling pathway stimulation. Phosphorylated at Thr-964 in response to PDGF.

It is found in the cytoplasm. The protein localises to the cytosol. Its subcellular location is the membrane. The protein resides in the cell projection. It localises to the filopodium. It is found in the lamellipodium. The protein localises to the basal cell membrane. Its subcellular location is the nucleus. The protein resides in the nucleus speckle. It localises to the cytoskeleton. It is found in the spindle pole. The catalysed reaction is a 1,2-diacyl-sn-glycero-3-phospho-(1D-myo-inositol-3,4,5-trisphosphate) + H2O = a 1,2-diacyl-sn-glycero-3-phospho-(1D-myo-inositol-3,4-bisphosphate) + phosphate. The enzyme catalyses 1,2-dioctanoyl-sn-glycero-3-phospho-(1D-myo-inositol-3,4,5-trisphosphate) + H2O = 1,2-dioctanoyl-sn-glycero-3-phospho-(1D-myo-inositol-3,4-bisphosphate) + phosphate. It carries out the reaction 1,2-dihexadecanoyl-sn-glycero-3-phospho-(1D-myo-inositol-3,4,5-trisphosphate) + H2O = 1,2-dihexadecanoyl-sn-glycero-3-phospho-(1D-myo-inositol-3,4-bisphosphate) + phosphate. Its activity is regulated as follows. Activated upon translocation to the sites of synthesis of PtdIns(3,4,5)P3 in the membrane. Enzymatic activity is enhanced in the presence of phosphatidylserine. Phosphatidylinositol (PtdIns) phosphatase that specifically hydrolyzes the 5-phosphate of phosphatidylinositol-3,4,5-trisphosphate (PtdIns(3,4,5)P3) to produce PtdIns(3,4)P2, thereby negatively regulating the PI3K (phosphoinositide 3-kinase) pathways. Required for correct mitotic spindle orientation and therefore progression of mitosis. Plays a central role in regulation of PI3K-dependent insulin signaling, although the precise molecular mechanisms and signaling pathways remain unclear. While overexpression reduces both insulin-stimulated MAP kinase and Akt activation, its absence does not affect insulin signaling or GLUT4 trafficking. Confers resistance to dietary obesity. May act by regulating AKT2, but not AKT1, phosphorylation at the plasma membrane. Part of a signaling pathway that regulates actin cytoskeleton remodeling. Required for the maintenance and dynamic remodeling of actin structures as well as in endocytosis, having a major impact on ligand-induced EGFR internalization and degradation. Participates in regulation of cortical and submembraneous actin by hydrolyzing PtdIns(3,4,5)P3 thereby regulating membrane ruffling. Regulates cell adhesion and cell spreading. Required for HGF-mediated lamellipodium formation, cell scattering and spreading. Acts as a negative regulator of EPHA2 receptor endocytosis by inhibiting via PI3K-dependent Rac1 activation. Acts as a regulator of neuritogenesis by regulating PtdIns(3,4,5)P3 level and is required to form an initial protrusive pattern, and later, maintain proper neurite outgrowth. Acts as a negative regulator of the FC-gamma-RIIA receptor (FCGR2A). Mediates signaling from the FC-gamma-RIIB receptor (FCGR2B), playing a central role in terminating signal transduction from activating immune/hematopoietic cell receptor systems. Involved in EGF signaling pathway. Upon stimulation by EGF, it is recruited by EGFR and dephosphorylates PtdIns(3,4,5)P3. Plays a negative role in regulating the PI3K-PKB pathway, possibly by inhibiting PKB activity. Down-regulates Fc-gamma-R-mediated phagocytosis in macrophages independently of INPP5D/SHIP1. In macrophages, down-regulates NF-kappa-B-dependent gene transcription by regulating macrophage colony-stimulating factor (M-CSF)-induced signaling. Plays a role in the localization of AURKA and NEDD9/HEF1 to the basolateral membrane at interphase in polarized cysts, thereby mediates cell cycle homeostasis, cell polarization and cilia assembly. Additionally promotion of cilia growth is also facilitated by hydrolysis of (PtdIns(3,4,5)P3) to PtdIns(3,4)P2. Promotes formation of apical membrane-initiation sites during the initial stages of lumen formation via Rho family-induced actin filament organization and CTNNB1 localization to cell-cell contacts. May also hydrolyze PtdIns(1,3,4,5)P4, and could thus affect the levels of the higher inositol polyphosphates like InsP6. Involved in endochondral ossification. This Canis lupus familiaris (Dog) protein is Phosphatidylinositol 3,4,5-trisphosphate 5-phosphatase 2.